The following is a 739-amino-acid chain: Catalase-peroxidase 1 (739 aa).

Residues 1 to 33 (MPEDRPIEDSPPIGEAQTDAPAGGCPAGFGRIK) are disordered. Residues 113 to 236 (WHAAGTYRVS…LAAVQMGLIY (124 aa)) constitute a cross-link (tryptophyl-tyrosyl-methioninium (Trp-Tyr) (with M-262)). His-114 acts as the Proton acceptor in catalysis. The segment at residues 236-262 (YVNPEGPNGNPDPQASAIDIRETFGRM) is a cross-link (tryptophyl-tyrosyl-methioninium (Tyr-Met) (with W-113)). A heme b-binding site is contributed by His-277.

It belongs to the peroxidase family. Peroxidase/catalase subfamily. In terms of assembly, homodimer or homotetramer. Heme b is required as a cofactor. Post-translationally, formation of the three residue Trp-Tyr-Met cross-link is important for the catalase, but not the peroxidase activity of the enzyme.

The catalysed reaction is H2O2 + AH2 = A + 2 H2O. The enzyme catalyses 2 H2O2 = O2 + 2 H2O. Its function is as follows. Bifunctional enzyme with both catalase and broad-spectrum peroxidase activity. May play a role in the intracellular survival of mycobacteria. In Mycolicibacterium smegmatis (strain ATCC 700084 / mc(2)155) (Mycobacterium smegmatis), this protein is Catalase-peroxidase 1.